The sequence spans 591 residues: Asparagine synthetase [glutamine-hydrolyzing] 2 (591 aa).

C2 functions as the For GATase activity in the catalytic mechanism. In terms of domain architecture, Glutamine amidotransferase type-2 spans 2 to 185 (CGILAVLGVA…PGHLYSSKTG (184 aa)). L-glutamine is bound by residues 50–54 (RLAIV), 75–77 (NGE), and D98. The Asparagine synthetase domain occupies 193 to 516 (PPWFSESIPS…PKNAARLTVP (324 aa)). ATP contacts are provided by residues L231, I267, and 341-342 (SG).

As to expression, expressed in companion cells of leaf sheath vascular bundles, and phloem-parenchyma cells, nucellar projections and nucellar epidermis of dorsal vascular bundles of grains.

The enzyme catalyses L-aspartate + L-glutamine + ATP + H2O = L-asparagine + L-glutamate + AMP + diphosphate + H(+). It participates in amino-acid biosynthesis; L-asparagine biosynthesis; L-asparagine from L-aspartate (L-Gln route): step 1/1. Its function is as follows. Essential for nitrogen assimilation, distribution and remobilization within the plant via the phloem. This chain is Asparagine synthetase [glutamine-hydrolyzing] 2, found in Oryza sativa subsp. japonica (Rice).